A 71-amino-acid chain; its full sequence is Disintegrin horridistatin-2 (71 aa).

One can recognise a Disintegrin domain in the interval 1–71 (GEECDCGSPA…ADCPRNGLYG (71 aa)). 6 disulfide bridges follow: Cys-4–Cys-19, Cys-6–Cys-14, Cys-13–Cys-36, Cys-27–Cys-33, Cys-32–Cys-57, and Cys-45–Cys-64. Residues 49-51 (RGD) carry the Cell attachment site motif.

The protein belongs to the venom metalloproteinase (M12B) family. P-II subfamily. P-IIa sub-subfamily. As to quaternary structure, monomer (disintegrin). As to expression, expressed by the venom gland.

It is found in the secreted. Functionally, inhibits ADP-induced platelet aggregation (IC(50) is 16.2 nM) by binding to alpha-IIb/beta-3 (ITGA2B/ITGB3). The protein is Disintegrin horridistatin-2 of Crotalus horridus (Timber rattlesnake).